A 302-amino-acid polypeptide reads, in one-letter code: Sulfate adenylyltransferase subunit 2 (302 aa).

The tract at residues 280 to 302 is disordered; that stretch reads RQGRLIDSDQSASMEQKKRQGYF.

Belongs to the PAPS reductase family. CysD subfamily. Heterodimer composed of CysD, the smaller subunit, and CysN.

The catalysed reaction is sulfate + ATP + H(+) = adenosine 5'-phosphosulfate + diphosphate. The protein operates within sulfur metabolism; hydrogen sulfide biosynthesis; sulfite from sulfate: step 1/3. Its function is as follows. With CysN forms the ATP sulfurylase (ATPS) that catalyzes the adenylation of sulfate producing adenosine 5'-phosphosulfate (APS) and diphosphate, the first enzymatic step in sulfur assimilation pathway. APS synthesis involves the formation of a high-energy phosphoric-sulfuric acid anhydride bond driven by GTP hydrolysis by CysN coupled to ATP hydrolysis by CysD. The protein is Sulfate adenylyltransferase subunit 2 of Shewanella baltica (strain OS195).